Reading from the N-terminus, the 127-residue chain is Lymphocyte antigen 6D (127 aa).

Positions 1–20 are cleaved as a signal peptide; that stretch reads MKTALLVLLVLAVATSPAWA. In terms of domain architecture, UPAR/Ly6 spans 21–108; the sequence is LRCHVCTNSA…AAPGHALLSS (88 aa). Intrachain disulfides connect cysteine 23–cysteine 45, cysteine 26–cysteine 32, cysteine 38–cysteine 63, cysteine 67–cysteine 86, and cysteine 87–cysteine 92. Serine 98 carries the GPI-anchor amidated serine lipid modification. A propeptide spans 99–127 (removed in mature form); that stretch reads AAPGHALLSSVTLGLATSLSLLTVMALCL.

Lymphoid cells lacking Ly6d, called ALP (all-lymphoid progenitor), retain full lymphoid potential and early thymic seeding activity, whereas cells containing Ly6d, called BLP (B-cell-biased lymphoid progenitor), up-regulate the B-cell specifying factors Ebf1 and Pax5 and behave essentially as B-cell progenitors (at protein level). Thymocytes and B-cells.

It is found in the cell membrane. Functionally, may act as a specification marker at earliest stage specification of lymphocytes between B- and T-cell development. Marks the earliest stage of B-cell specification. This chain is Lymphocyte antigen 6D (Ly6d), found in Mus musculus (Mouse).